We begin with the raw amino-acid sequence, 415 residues long: Arginine biosynthesis bifunctional protein ArgJ (415 aa).

Residues Thr-156, Lys-182, Thr-193, Glu-279, Asn-410, and Thr-415 each coordinate substrate. Residue Thr-193 is the Nucleophile of the active site.

This sequence belongs to the ArgJ family. Heterotetramer of two alpha and two beta chains.

The protein resides in the cytoplasm. It catalyses the reaction N(2)-acetyl-L-ornithine + L-glutamate = N-acetyl-L-glutamate + L-ornithine. The catalysed reaction is L-glutamate + acetyl-CoA = N-acetyl-L-glutamate + CoA + H(+). It participates in amino-acid biosynthesis; L-arginine biosynthesis; L-ornithine and N-acetyl-L-glutamate from L-glutamate and N(2)-acetyl-L-ornithine (cyclic): step 1/1. It functions in the pathway amino-acid biosynthesis; L-arginine biosynthesis; N(2)-acetyl-L-ornithine from L-glutamate: step 1/4. Functionally, catalyzes two activities which are involved in the cyclic version of arginine biosynthesis: the synthesis of N-acetylglutamate from glutamate and acetyl-CoA as the acetyl donor, and of ornithine by transacetylation between N(2)-acetylornithine and glutamate. In Synechococcus sp. (strain ATCC 27144 / PCC 6301 / SAUG 1402/1) (Anacystis nidulans), this protein is Arginine biosynthesis bifunctional protein ArgJ.